A 150-amino-acid polypeptide reads, in one-letter code: Large ribosomal subunit protein bL9 (150 aa).

The protein belongs to the bacterial ribosomal protein bL9 family.

Functionally, binds to the 23S rRNA. The protein is Large ribosomal subunit protein bL9 of Leuconostoc citreum (strain KM20).